The following is a 434-amino-acid chain: Hydrogenobyrinate a,c-diamide synthase (434 aa).

The GATase cobBQ-type domain occupies 243 to 434 (RIAVARDIAF…MHLIDVAGAA (192 aa)). Cys-326 serves as the catalytic Nucleophile.

It belongs to the CobB/CbiA family. In terms of assembly, homodimer. Requires Mg(2+) as cofactor.

The catalysed reaction is hydrogenobyrinate + 2 L-glutamine + 2 ATP + 2 H2O = hydrogenobyrinate a,c-diamide + 2 L-glutamate + 2 ADP + 2 phosphate + 2 H(+). Its pathway is cofactor biosynthesis; adenosylcobalamin biosynthesis; cob(II)yrinate a,c-diamide from precorrin-2 (aerobic route): step 9/10. Its function is as follows. Catalyzes the ATP-dependent amidation of the two carboxylate groups at positions a and c of hydrogenobyrinate, using either L-glutamine or ammonia as the nitrogen source. To a much lesser extent, can also use cobyrinate as substrate in vitro, but the physiological substrate is indeed hydrogenobyrinate, as part of the aerobic pathway for cobalamin biosynthesis. This is Hydrogenobyrinate a,c-diamide synthase from Sinorhizobium sp.